Consider the following 104-residue polypeptide: NADH-quinone oxidoreductase subunit K (104 aa).

The next 3 helical transmembrane spans lie at 4 to 24 (VPAS…LFGA), 31 to 51 (VIVL…LVAF), and 67 to 87 (LFTM…LIAL).

It belongs to the complex I subunit 4L family. As to quaternary structure, NDH-1 is composed of 14 different subunits. Subunits NuoA, H, J, K, L, M, N constitute the membrane sector of the complex.

The protein localises to the cell membrane. It catalyses the reaction a quinone + NADH + 5 H(+)(in) = a quinol + NAD(+) + 4 H(+)(out). Its function is as follows. NDH-1 shuttles electrons from NADH, via FMN and iron-sulfur (Fe-S) centers, to quinones in the respiratory chain. The immediate electron acceptor for the enzyme in this species is believed to be a menaquinone. Couples the redox reaction to proton translocation (for every two electrons transferred, four hydrogen ions are translocated across the cytoplasmic membrane), and thus conserves the redox energy in a proton gradient. The sequence is that of NADH-quinone oxidoreductase subunit K from Bacillus cereus (strain AH187).